A 141-amino-acid chain; its full sequence is Nucleoside diphosphate kinase (141 aa).

ATP contacts are provided by Lys9, Phe57, Arg85, Thr91, Arg102, and Asn112. Catalysis depends on His115, which acts as the Pros-phosphohistidine intermediate.

This sequence belongs to the NDK family. As to quaternary structure, homotetramer. Requires Mg(2+) as cofactor.

The protein resides in the cytoplasm. It carries out the reaction a 2'-deoxyribonucleoside 5'-diphosphate + ATP = a 2'-deoxyribonucleoside 5'-triphosphate + ADP. The catalysed reaction is a ribonucleoside 5'-diphosphate + ATP = a ribonucleoside 5'-triphosphate + ADP. Its function is as follows. Major role in the synthesis of nucleoside triphosphates other than ATP. The ATP gamma phosphate is transferred to the NDP beta phosphate via a ping-pong mechanism, using a phosphorylated active-site intermediate. The chain is Nucleoside diphosphate kinase from Chlamydia abortus (strain DSM 27085 / S26/3) (Chlamydophila abortus).